Consider the following 361-residue polypeptide: Ribosomal RNA large subunit methyltransferase M (361 aa).

Residues serine 186, 219 to 222 (CPGG), aspartate 238, aspartate 258, and aspartate 275 each bind S-adenosyl-L-methionine. Lysine 304 serves as the catalytic Proton acceptor.

This sequence belongs to the class I-like SAM-binding methyltransferase superfamily. RNA methyltransferase RlmE family. RlmM subfamily. As to quaternary structure, monomer.

It is found in the cytoplasm. The enzyme catalyses cytidine(2498) in 23S rRNA + S-adenosyl-L-methionine = 2'-O-methylcytidine(2498) in 23S rRNA + S-adenosyl-L-homocysteine + H(+). In terms of biological role, catalyzes the 2'-O-methylation at nucleotide C2498 in 23S rRNA. The sequence is that of Ribosomal RNA large subunit methyltransferase M from Pseudoalteromonas translucida (strain TAC 125).